The sequence spans 207 residues: N-(5'-phosphoribosyl)anthranilate isomerase (207 aa).

The protein belongs to the TrpF family.

It carries out the reaction N-(5-phospho-beta-D-ribosyl)anthranilate = 1-(2-carboxyphenylamino)-1-deoxy-D-ribulose 5-phosphate. The protein operates within amino-acid biosynthesis; L-tryptophan biosynthesis; L-tryptophan from chorismate: step 3/5. In Petrotoga mobilis (strain DSM 10674 / SJ95), this protein is N-(5'-phosphoribosyl)anthranilate isomerase.